We begin with the raw amino-acid sequence, 372 residues long: Transcription factor YY2 (372 aa).

A mediates transcriptional activation region spans residues 32–102 (MEDIPTESVQ…SDNQLGNDLE (71 aa)). Over residues 126–136 (SAASTSTSTQS) the composition is skewed to low complexity. Disordered regions lie at residues 126–172 (SAAS…WEQK) and 186–210 (TMWS…PPDY). Residues 137–146 (RSKKPSKKPS) show a composition bias toward basic residues. 2 stretches are compositionally biased toward polar residues: residues 154–165 (EANPAGSSSSLG) and 186–196 (TMWSPNDNNDQ). A mediates transcriptional repression region spans residues 237-372 (EFTKVKPKRS…LTHVKTKNNP (136 aa)). C2H2-type zinc fingers lie at residues 254-278 (VPCS…LHIH), 283-305 (HVCA…QLVH), 311-335 (FQCT…LRIH), and 341-365 (FVCP…ILTH).

This sequence belongs to the YY transcription factor family. Expressed in kidney, liver, spleen and testis but not in colon.

The protein resides in the nucleus. Functionally, functions as a multifunctional transcription factor that may exhibit positive and negative control on a large number of genes. May antagonize YY1 and function in development and differentiation. The sequence is that of Transcription factor YY2 (YY2) from Homo sapiens (Human).